Reading from the N-terminus, the 237-residue chain is Large ribosomal subunit protein uL1 (237 aa).

This sequence belongs to the universal ribosomal protein uL1 family. As to quaternary structure, part of the 50S ribosomal subunit.

In terms of biological role, binds directly to 23S rRNA. The L1 stalk is quite mobile in the ribosome, and is involved in E site tRNA release. Its function is as follows. Protein L1 is also a translational repressor protein, it controls the translation of the L11 operon by binding to its mRNA. The protein is Large ribosomal subunit protein uL1 of Dehalococcoides mccartyi (strain ATCC BAA-2100 / JCM 16839 / KCTC 5957 / BAV1).